The sequence spans 285 residues: MKYIGAHVSAAGGLANAAIRAAEIDATAFALFTKNQRQWRAAPLTTQTIDEFKAACEKYHYTSAQILPHDSYLINLGHPVAEALEKSRDAFIDEMQRCEQLGLSLLNFHPGSHLMQISEEDCLARIAESINIALDKTQGVTAVIENTAGQGSNLGFKFEHLAAIIDGVEDKSRVGVCIDTCHAFAAGYDLRTPAECEKTFADFARIVGFKYLRGMHLNDAKSTFGSRVDRHHSLGEGNIGHDAFRWIMQDDRFDGIPLILETINPDIWAEEIAWLKAQQTEKAVA.

9 residues coordinate Zn(2+): H69, H109, E145, D179, H182, H216, D229, H231, and E261.

The protein belongs to the AP endonuclease 2 family. The cofactor is Zn(2+).

It catalyses the reaction Endonucleolytic cleavage to 5'-phosphooligonucleotide end-products.. Its function is as follows. Endonuclease IV plays a role in DNA repair. It cleaves phosphodiester bonds at apurinic or apyrimidinic (AP) sites, generating a 3'-hydroxyl group and a 5'-terminal sugar phosphate. The sequence is that of Probable endonuclease 4 from Escherichia coli O127:H6 (strain E2348/69 / EPEC).